The sequence spans 298 residues: Elongation factor Ts (298 aa).

Residues 79–82 (TDFV) form an involved in Mg(2+) ion dislocation from EF-Tu region.

This sequence belongs to the EF-Ts family.

It is found in the cytoplasm. Functionally, associates with the EF-Tu.GDP complex and induces the exchange of GDP to GTP. It remains bound to the aminoacyl-tRNA.EF-Tu.GTP complex up to the GTP hydrolysis stage on the ribosome. The polypeptide is Elongation factor Ts (tsf) (Mycoplasma genitalium (strain ATCC 33530 / DSM 19775 / NCTC 10195 / G37) (Mycoplasmoides genitalium)).